The following is a 1704-amino-acid chain: MSSVSEVNVDIKDFLMSINLEQYLLHFHESGFTTVKDCAAINDSLLQKIGISPTGHRRRILKQLQIILSKMQDIPIYANVHKTKKNDDPSKDYHVPSSDQNICIELSNSGSVQTSSPPQLETVRKNLEDSDASVERSQYPQSDDKLSPPKRDFPTAEEPHLNLGSLNDSLFGSDNIKIESLITKKTVDHTVEEQQTEKVKLITENLSKLPNADSECLSFVGCSTSGTNSGNGTNGLLEGSPPSPFFKFQGEMIVNDLYVPSSPILAPVRSRSKLVSRPSRSFLLRHRPVPEIPGSTKGVSGSYFRERRNVATSTEKSVAWQNSNEENSSSIFPYGETFLFQRLENSKKRSIKNEFLTQGEALKGEAATATNSFIIKSSIYDNRKEKISEDKVEDIWIPREDKNNFLIDTASESEYSTVEECFQSLRRKNSKASKSRTQKALILDSVNRHSYPLSSTSGNADSSAVSSQAISPYACFYGASAKKVKSGWLDKLSPQGKRMFQKRWVKFDGLSISYYNNEKEMYSKGIIPLSAISTVRVQGDNKFEVVTTQRTFVFRVEKEEERNDWISILLNALKSQSLTSQSQAVVTPEKCGYLELRGYKAKIFTVLSGNSVWLCKNEQDFKSGLGITIIPMNVANVKQVDRTVKQSFEIITPYRSFSFTAETEKEKQDWIEAVQQSIAETLSDYEVAEKIWFNESNRSCADCKAPDPDWASINLCVVICKKCAGQHRSLGPKDSKVRSLKMDASIWSNELIELFIVIGNKRANDFWAGNLQKDEELHMDSPVEKRKNFITQKYKEGKFRKTLLASLTKEELNKALCAAVVKPDVLETMALLFSGADVMCATGDPVHSTPYLLAKKAGQSLQMEFLYHNKFSDFPQHDIHSEGVLSQESSQSTFLCDFLYQAPSAASKLSSEKKLLEETNKKWCVLEGGFLSYYENDKSTTPNGTININEVICLAIHKEDFYLNTGPIFIFEIYLPSERVFLFGAETSQAQRKWTEAIAKHFVPLFAENLTEADYDLIGQLFYKDCHALDQWRKGWFAMDKSSLHFCLQMQEVQGDRMHLRRLQELTISTMVQNGEKLDVLLLVEKGRTLYIHGHTKLDFTVWHTAIEKAAGTDGNALQDQQLSKNDVPIIVNSCIAFVTQYGLGCKYIYQKNGDPLHISELLESFKKDARSFKLRAGKHQLEDVTAVLKSFLSDIDDALLTKELYPYWISALDTQDDKERIKKYGAFIRSLPGVNRATLAAIIEHLYRVQKCSEINHMNAHNLALVFSSCLFQTKGQTSEEVNVIEDLINNYVEIFEVKEDQVKQMDIENSFITKWKDTQVSQAGDLLIEVYVERKEPDCSIIIRISPVMEAEELTNDILAIKNIIPTKGDIWATFEVIENEELERPLHYKENVLEQVLRWSSLAEPGSAYLVVKRFLTADTIKHCSDRSTLGSIKEGILKIKEEPSKILSGNKFQDRYFVLRDGFLFLYKDVKSSKHDKMFSLSSMKFYRGVKKKMKPPTSWGLTAYSEKHHWHLCCDSSRTQTEWMTSIFIAQHEYDIWPPAGKERKRSITKNPKIGGLPLIPIQHEGNATLARKNIESARAELERLRLSEKCDKESVDSSLKERASMVAHCLEHKDDKLRNRPRKHRSFNCLEDTEPEAPLGQPKGHKGLKTLRKTEDRNSKATLDSDHKLPSRVIEELNVVLQRSRTLPKELQDEQILK.

Residues 6–70 (EVNVDIKDFL…LKQLQIILSK (65 aa)) enclose the SAM domain. Tyrosine 77 carries the post-translational modification Phosphotyrosine. The tract at residues 126 to 161 (NLEDSDASVERSQYPQSDDKLSPPKRDFPTAEEPHL) is disordered. A compositionally biased stretch (basic and acidic residues) spans 142 to 160 (SDDKLSPPKRDFPTAEEPH). 2 PH domains span residues 482 to 574 (KKVK…NALK) and 587 to 679 (TPEK…QSIA). The Arf-GAP domain maps to 676–811 (QSIAETLSDY…TLLASLTKEE (136 aa)). The C4-type zinc-finger motif lies at 700–723 (CADCKAPDPDWASINLCVVICKKC). PH domains are found at residues 878–1003 (DIHS…KHFV) and 1014–1114 (DYDL…AGTD). The 182-residue stretch at 1116 to 1297 (NALQDQQLSK…DLINNYVEIF (182 aa)) folds into the Rho-GAP domain. A Ras-associating domain is found at 1326–1420 (GDLLIEVYVE…AYLVVKRFLT (95 aa)). The PH 5 domain maps to 1434 to 1537 (GSIKEGILKI…WMTSIFIAQH (104 aa)). Serine 1632 is subject to Phosphoserine. The interval 1636–1675 (LEDTEPEAPLGQPKGHKGLKTLRKTEDRNSKATLDSDHKL) is disordered. The span at 1658 to 1675 (RKTEDRNSKATLDSDHKL) shows a compositional bias: basic and acidic residues.

In terms of tissue distribution, detected in brain, thymus, lymph node, thyroid, spinal cord, trachea, heart, skeletal muscle, spleen, kidney, liver, placenta, lung and peripheral blood leukocytes.

It localises to the cytoplasm. In terms of biological role, phosphatidylinositol 3,4,5-trisphosphate-dependent GTPase-activating protein that modulates actin cytoskeleton remodeling by regulating ARF and RHO family members. Is activated by phosphatidylinositol 3,4,5-trisphosphate (PtdIns(3,4,5)P3) binding. Can be activated by phosphatidylinositol 3,4-bisphosphate (PtdIns(3,4,5)P2) binding, albeit with lower efficiency. The sequence is that of Arf-GAP with Rho-GAP domain, ANK repeat and PH domain-containing protein 2 (ARAP2) from Homo sapiens (Human).